A 354-amino-acid chain; its full sequence is UDP-3-O-acylglucosamine N-acyltransferase (354 aa).

H247 functions as the Proton acceptor in the catalytic mechanism.

This sequence belongs to the transferase hexapeptide repeat family. LpxD subfamily. In terms of assembly, homotrimer.

It catalyses the reaction a UDP-3-O-[(3R)-3-hydroxyacyl]-alpha-D-glucosamine + a (3R)-hydroxyacyl-[ACP] = a UDP-2-N,3-O-bis[(3R)-3-hydroxyacyl]-alpha-D-glucosamine + holo-[ACP] + H(+). It participates in bacterial outer membrane biogenesis; LPS lipid A biosynthesis. Its function is as follows. Catalyzes the N-acylation of UDP-3-O-acylglucosamine using 3-hydroxyacyl-ACP as the acyl donor. Is involved in the biosynthesis of lipid A, a phosphorylated glycolipid that anchors the lipopolysaccharide to the outer membrane of the cell. In Chlamydia trachomatis serovar A (strain ATCC VR-571B / DSM 19440 / HAR-13), this protein is UDP-3-O-acylglucosamine N-acyltransferase.